Here is an 811-residue protein sequence, read N- to C-terminus: DNA gyrase subunit A (811 aa).

The region spanning 30–493 is the Topo IIA-type catalytic domain; the sequence is LPDVRDGLKP…LEEDIGKEDL (464 aa). Catalysis depends on Tyr-118, which acts as the O-(5'-phospho-DNA)-tyrosine intermediate. The GyrA-box motif lies at 520–526; that stretch reads QGRGGRG.

It belongs to the type II topoisomerase GyrA/ParC subunit family. As to quaternary structure, heterotetramer, composed of two GyrA and two GyrB chains. In the heterotetramer, GyrA contains the active site tyrosine that forms a transient covalent intermediate with DNA, while GyrB binds cofactors and catalyzes ATP hydrolysis.

The protein localises to the cytoplasm. It catalyses the reaction ATP-dependent breakage, passage and rejoining of double-stranded DNA.. Functionally, a type II topoisomerase that negatively supercoils closed circular double-stranded (ds) DNA in an ATP-dependent manner to modulate DNA topology and maintain chromosomes in an underwound state. Negative supercoiling favors strand separation, and DNA replication, transcription, recombination and repair, all of which involve strand separation. Also able to catalyze the interconversion of other topological isomers of dsDNA rings, including catenanes and knotted rings. Type II topoisomerases break and join 2 DNA strands simultaneously in an ATP-dependent manner. The sequence is that of DNA gyrase subunit A from Deinococcus deserti (strain DSM 17065 / CIP 109153 / LMG 22923 / VCD115).